We begin with the raw amino-acid sequence, 479 residues long: MHFSTVTRDMEAFAASSLSGLGSPSPGADPFGPREPPPPRYDPCAAVPGAPGPPPPRAYPFAPAPGAAGSSAAESEGPGASRAAAVKAPVKKNPKVASVSVQLEMKALWDEFNQLGTEMIVTKAGRRMFPTFQVKLFGMDPMADYMLLMDFVPVDDKRYRYAFHSSSWLVAGKADPATPGRVHYHPDSPAKGAQWMKQIVSFDKLKLTNNLLDDNGQIILNSMHRYQPRFHVVYVDPRKDSEKYAEENFKTFVFEETRFTAVTAYQNHRITQLKIASNPFAKGFRDCDPEDWPRNHRPGALPLVSAFARSRNPVASPTQPNGSDKDAAEARREFDRDSGPAALGDATHPPQLLARVLSPALPGPGGLVPLPGGSGGRHSPPHADLRLEAPGASEPLHHHPYKYPAAAYDHYLGAKSRPAPYPLPGLRGHGYHPHAHPHAHPHHHHHPAVNPAAAAAAAAAANVYSSAAAPPGAYDYCPR.

Composition is skewed to low complexity over residues 15–31 (ASSL…ADPF) and 59–86 (YPFA…AAAV). Positions 15–86 (ASSLSGLGSP…GPGASRAAAV (72 aa)) are disordered. A DNA-binding region (T-box) is located at residues 108 to 286 (LWDEFNQLGT…SNPFAKGFRD (179 aa)). Residues 311 to 398 (RNPVASPTQP…APGASEPLHH (88 aa)) are disordered. Residues 313–322 (PVASPTQPNG) show a composition bias toward polar residues. Residues 323–338 (SDKDAAEARREFDRDS) are compositionally biased toward basic and acidic residues. The Nuclear localization signal motif lies at 415–426 (KSRPAPYPLPGL).

In terms of assembly, binds DNA as a dimer. Interacts with DSCR6. Interacts with NKX2-5. Expressed in skeletal muscle, lung and testis. Highly expressed in hair follicle stem cell, but not in terminally differentiating cells.

It localises to the nucleus. Transcription factor that plays a key role in cardiovascular development by promoting pharyngeal arch segmentation during embryonic development. Also involved in craniofacial muscle development. Together with NKX2-5, acts as a regulator of asymmetric cardiac morphogenesis by promoting expression of PITX2. Acts upstream of TBX1 for the formation of the thymus and parathyroid glands from the third pharyngeal pouch. Required for hair follicle stem cell self-renewal. Binds to the palindromic T site 5'-TTCACACCTAGGTGTGAA-3' DNA sequence. The polypeptide is T-box transcription factor TBX1 (Mus musculus (Mouse)).